Reading from the N-terminus, the 233-residue chain is uncharacterized protein (233 aa).

The protein belongs to the asfivirus H233R family.

This is an uncharacterized protein from African swine fever virus (isolate Warthog/Namibia/Wart80/1980) (ASFV).